The sequence spans 104 residues: Class I hydrophobin 12 (104 aa).

A signal peptide spans 1–25 (MFSKATLFFTAAVVIVAAGATPTTS). 4 disulfides stabilise this stretch: Cys-27-Cys-85, Cys-34-Cys-79, Cys-35-Cys-67, and Cys-86-Cys-99.

The protein belongs to the fungal hydrophobin family. Self-assembles to form functional amyloid fibrils called rodlets. Self-assembly into fibrillar rodlets occurs spontaneously at hydrophobic:hydrophilic interfaces and the rodlets further associate laterally to form amphipathic monolayers.

The protein resides in the secreted. The protein localises to the cell wall. Functionally, aerial growth, conidiation, and dispersal of filamentous fungi in the environment rely upon a capability of their secreting small amphipathic proteins called hydrophobins (HPBs) with low sequence identity. Class I can self-assemble into an outermost layer of rodlet bundles on aerial cell surfaces, conferring cellular hydrophobicity that supports fungal growth, development and dispersal; whereas Class II form highly ordered films at water-air interfaces through intermolecular interactions but contribute nothing to the rodlet structure. Hydph12 is a class I hydrophobin involved in the formation of mycelium knots. The protein is Class I hydrophobin 12 of Pleurotus ostreatus (strain PC15) (Oyster mushroom).